Consider the following 476-residue polypeptide: Probable serine carboxypeptidase CPVL (476 aa).

An N-terminal signal peptide occupies residues 1–22 (MVGAMWKVIVSLVLLMPGPCDG). 2 N-linked (GlcNAc...) asparagine glycosylation sites follow: N81 and N132. S204 is a catalytic residue. N-linked (GlcNAc...) asparagine glycosylation is found at N307 and N346. Active-site residues include D388 and H448.

It belongs to the peptidase S10 family. As to expression, expressed in macrophages but not in other leukocytes. Abundantly expressed in heart and kidney. Also expressed in spleen, leukocytes, and placenta.

Functionally, may be involved in the digestion of phagocytosed particles in the lysosome, participation in an inflammatory protease cascade, and trimming of peptides for antigen presentation. This chain is Probable serine carboxypeptidase CPVL (CPVL), found in Homo sapiens (Human).